A 1123-amino-acid chain; its full sequence is uncharacterized protein (1123 aa).

This is an uncharacterized protein from Ictaluridae (bullhead catfishes).